A 1379-amino-acid chain; its full sequence is MSTDIATQLKGSRSDVEKVRKTVEAKFRELSGDGLPLRYEVNVLRHICLALKDNLHQNSDLYCDIMGIMLPRVVPCEEKPSLWEAHLSSLRYIHHGLFHQRSIEACQKLYNLIRQQPCRLQEESDYKIYLDIHLTHFNGFHVLLQKQKLPLEATSQLCYALESLGDLFAAMTQRQISLCATLLVQLNESLFGKRSRSFFKSLSFLPSESLAKMFNALLMLLASSTSSNLANLFPECLSLTLALVQIDMFSPQSNQQMSLQLLRMSKELFRQESNLCYALQLMYYYIKLIFVREPTGDFKRTYIDLSSKFQHFFEHKVASHAKEQWLADFLVAIQLLQVLIHQSNSKLQSPFQIFWQQFDGESSPEIYTAHFQLLQTCASLAVNITRSPLGCSCSHEACKSVRRHCILAYGLCALDAYINWKPAAEQRANVSPHKPLLGVVKYSMDVAKTMKCLGPTSVEIIKLVRQLTYVADQVTCPEQMSVLLPLLEPLQKLRPLVADQDMSSLLRRLFKASSHCGDSNIACRIQASYLASITNPARLRSQVCLYYHNLGKKGTEIKRCVYEWHESTPLPFPLTPDQKKQLYDTDFFALLHYLRSPSTAHMESLIRCRTSDYHLVLLARQMRKDDSISKKCIEVHDKLRQQRSLSRMDNLCLGHASVGLLLDALEAQKTKVSTKEITENMFEELLLSKNLWQMNIQREQRLVNYASEAISAFSNFFDRADQEPLSANETSIDWEALIDDAIATANALSSMGYQSEEDDAWLLLLRMGRLLEDRFTYLRALNHFLSQNEVSSRLNLKLGEEVEVAEELLDDLWPQLKNGKFFKRQQTTVMLCFCHLASYYARMECYSHAQLLLLHVEQLREEFPERQGKSDIVLLTLQTVRFRIGYQQRKPTNCRLPTPLRQLDILLDNVRSFCNLSSLDGGSLQLLLSTLVRESTECSANRLSERLSFSNIALHLVLQSGLALRAIEVFLAWLWTNLQMESFDKAQSKLRLIEHCLGIKQLNPTSRPEKEAIKDVAISDLASNMHLLQLVEPIRKQQLLNMASPNLLKMRPHSPNPQLDLDRYITLDVAPANLRENSQLQCLYFVTGCLHARLRFLQRNSEQLEEFYGRAHNWMQEKPPMSSALYPMLHAQQLYHLNYLRFARKHVEAISTAQLGLKMRSRAVDINFEYNFLAQLKTAQLELKPVGQDKPQVKILRRALVFNHSPEDKKRTATGSVSAVKNTASKVKQSAKKAPRFRIYEELELRPPSATSCSSSGGSGTENTPPSDHVDLNACQAIEISDDDDSPLVSTKKTQPKSREKAKPKATSKACKVLTLDNSLEIVETPTITTSTRSTRARLRQPVETPKTATLSSKRTRRQVLEAQAPETESISTRTRHRH.

Residues 1031-1037 (VEPIRKQ) form a separase cleavage-site region. Disordered stretches follow at residues 1206 to 1231 (PEDK…KQSA), 1248 to 1309 (PSAT…ATSK), and 1328 to 1379 (ITTS…RHRH). The span at 1213-1228 (ATGSVSAVKNTASKVK) shows a compositional bias: polar residues. Residues 1248 to 1267 (PSATSCSSSGGSGTENTPPS) show a composition bias toward low complexity.

In terms of assembly, interacts with pim and Sse. Cleavage of thr contributes to inactivation of Sse. Proteolytically cleaved after the metaphase-to-anaphase transition, C-terminal cleavage product is degraded. Cleavage can only proceed within complexes that contain active Sse. As to expression, during embryogenesis, expressed in Malpighian tubule buds, and epithelia of foregut and hindgut.

The protein localises to the cytoplasm. In terms of biological role, required specifically for chromosome disjunction during all mitoses; maternally provided protein is sufficient until mitosis 14 then zygotic protein is required. Involved in formation and/or maintenance of epithelial structures: bud extension during Malpighian tubule development, and foregut and hindgut morphogenesis. The chain is Protein three rows (thr) from Drosophila melanogaster (Fruit fly).